The sequence spans 427 residues: Steroid C26-monooxygenase (427 aa).

Residue Cys-360 participates in heme binding.

It belongs to the cytochrome P450 family. Requires heme as cofactor.

The enzyme catalyses cholest-4-en-3-one + 6 reduced [2Fe-2S]-[ferredoxin] + 3 O2 + 5 H(+) = (25S)-3-oxocholest-4-en-26-oate + 6 oxidized [2Fe-2S]-[ferredoxin] + 4 H2O. It participates in steroid metabolism; cholesterol degradation. In terms of biological role, involved in the utilization of cholesterol as the sole carbon and energy source by degrading the side chain. Primarily catalyzes the sequential oxidation of the terminal methyl of cholest-4-en-3-one into (25S)-26-hydroxycholest-4-en-3-one (alcohol), (25S)-26-oxocholest-4-en-3-one (aldehyde), to finally yield the carboxylic acid (25S)-3-oxocholest-4-en-26-oate. Also able to sequentially oxidize cholesterol itself, not only cholest-4-en-3-one. This Mycolicibacterium smegmatis (strain ATCC 700084 / mc(2)155) (Mycobacterium smegmatis) protein is Steroid C26-monooxygenase.